The sequence spans 768 residues: Cullin-3 (768 aa).

Ser-2 carries the post-translational modification N-acetylserine. The interaction with KLHL18 stretch occupies residues 2–41; the sequence is SNLSKGTGSRKDTKMRIRAFPMTMDEKYVNSIWDLLKNAI. Ser-585 carries the phosphoserine modification. Positions 677-698 are disordered; sequence VAAKQGESDPERKETRQKVDDD. The segment covering 682–698 has biased composition (basic and acidic residues); sequence GESDPERKETRQKVDDD. The Cullin neddylation domain occupies 698-760; the sequence is DRKHEIEAAI…REYLARTPED (63 aa). Lys-712 participates in a covalent cross-link: Glycyl lysine isopeptide (Lys-Gly) (interchain with G-Cter in NEDD8).

The protein belongs to the cullin family. In terms of assembly, forms neddylation-dependent homodimers. Component of multiple BCR (BTB-CUL3-RBX1) E3 ubiquitin-protein ligase complexes formed of CUL3, RBX1 and a variable BTB domain-containing protein acting as both, adapter to cullin and substrate recognition subunit. The BCR complex may be active as a heterodimeric complex, in which NEDD8, covalently attached to one CUL3 molecule, binds to the C-terminus of a second CUL3 molecule. Interacts with RBX1, RNF7, CYCE and TIP120A/CAND1. Part of the BCR(SPOP) containing SPOP, and of BCR containing homodimeric SPOPL or the heterodimer formed by SPOP and SPOPL. Part of the probable BCR(KLHL9-KLHL13) complex with BTB domain proteins KLHL9 and KLHL13. Part of the BCR(KLHL41) complex containing KLHL41. Component of the BCR(KLHL12) E3 ubiquitin ligase complex, at least composed of CUL3 and KLHL12 and RBX1. Component of the BCR(KLHL3) E3 ubiquitin ligase complex, at least composed of CUL3 and KLHL3 and RBX1. Part of the BCR(ENC1) complex containing ENC1. Part of a complex consisting of BMI1/PCGF4, CUL3 and SPOP. Part of a complex consisting of BRMS1, CUL3 and SPOP. Component of the BCR(KLHL21) E3 ubiquitin ligase complex, at least composed of CUL3, KLHL21 and RBX1. Component of the BCR(KLHL22) E3 ubiquitin ligase complex, at least composed of CUL3, KLHL22 and RBX1. Component of the BCR(KLHL25) E3 ubiquitin ligase complex, at least composed of CUL3, KLHL25 and RBX1. Part of a complex consisting of MACROH2A1, CUL3 and SPOP. Component of the BCR(KLHL42) E3 ubiquitin ligase complex, at least composed of CUL3 and KLHL42. Component of the BCR(KBTBD8) E3 ubiquitin ligase complex, at least composed of CUL3, KBTBD8 and RBX1. Interacts with KLHL42 (via the BTB domain). Interacts with KATNA1; the interaction is enhanced by KLHL42. Interacts with KCTD5, KLHL9, KLHL11, KLHL13, GAN, ZBTB16, KLHL3, KLHL15, KLHL20, KLHL36, GMCL2, BTBD1. Part of a complex that contains CUL3, RBX1 and GAN. Interacts (via BTB domain) with KLHL17; the interaction regulates surface GRIK2 expression. Interacts with KCTD7. Part of the BCR(GAN) complex containing GAN. Part of the BCR(KEAP1) complex containing KEAP1. vInteracts with KLHL10. Interacts with KAT5 and ATF2. Interacts with KCTD17 in the BCR(KCTD17) E3 ubiquitin ligase complex, at least composed of CUL3, KCTD17 and RBX1. Interacts (when neddylated) with ARIH1; leading to activate the E3 ligase activity of ARIH1. Interacts with COPS9. Interacts with PPP2R5B; this interaction is indirect and mediated through KLHL15-binding and leads to PPP2R5B proteasomal degradation. Interacts with RBBP8/CtIP; this interaction is indirect and mediated through KLHL15-binding and leads to RBBP8 proteasomal degradation. Interacts with KLHL24 in the BCR(KLHL24) E3 ubiquitin ligase complex, composed of CUL3, RBX1 and KLHL24. Interacts with RHOBTB2. Interacts (via BTB domain) with KLHL17; the interaction regulates surface GRIK2 expression. Interacts with AURKA and KLHL18 (via BTB domain). Interacts (unneddylated form) with DCUN1D1, DCUN1D2, DCUN1D3, DCUN1D4 and DCUN1D5; these interactions promote the cullin neddylation. Component of a BCR3 (BTB-CUL3-RBX1) E3 ubiquitin ligase complex, also named Cul3-RING ubiquitin ligase complex CUL3(KBTBD6/7), composed of CUL3, RBX1, KBTBD6 and KBTBD7. Component of the BCR(KBTBD2) E3 ubiquitin ligase complex, at least composed of CUL3, KBTBD2 and RBX1. Interacts with KBTBD2 (via the BTB domain). Component of the BCR(KBTBD4) E3 ubiquitin ligase complex, at least composed of CUL3, KBTBD4 and RBX1. Post-translationally, neddylated. Attachment of NEDD8 is required for the E3 ubiquitin-protein ligase activity of the BCR complex. Deneddylated via its interaction with the COP9 signalosome (CSN) complex.

Its subcellular location is the nucleus. The protein resides in the golgi apparatus. The protein localises to the cell projection. It localises to the cilium. It is found in the flagellum. Its subcellular location is the cytoplasm. The protein resides in the cytoskeleton. The protein localises to the spindle. It localises to the microtubule organizing center. It is found in the centrosome. Its subcellular location is the spindle pole. It participates in protein modification; protein ubiquitination. In terms of biological role, core component of multiple cullin-RING-based BCR (BTB-CUL3-RBX1) E3 ubiquitin-protein ligase complexes which mediate the ubiquitination and subsequent proteasomal degradation of target proteins. BCR complexes and ARIH1 collaborate in tandem to mediate ubiquitination of target proteins. As a scaffold protein may contribute to catalysis through positioning of the substrate and the ubiquitin-conjugating enzyme. The E3 ubiquitin-protein ligase activity of the complex is dependent on the neddylation of the cullin subunit and is inhibited by the association of the deneddylated cullin subunit with TIP120A/CAND1. The functional specificity of the BCR complex depends on the BTB domain-containing protein as the substrate recognition component. BCR(KLHL42) is involved in ubiquitination of KATNA1. BCR(SPOP) is involved in ubiquitination of BMI1/PCGF4, BRMS1, MACROH2A1 and DAXX, GLI2 and GLI3. Can also form a cullin-RING-based BCR (BTB-CUL3-RBX1) E3 ubiquitin-protein ligase complex containing homodimeric SPOPL or the heterodimer formed by SPOP and SPOPL; these complexes have lower ubiquitin ligase activity. BCR(KLHL9-KLHL13) controls the dynamic behavior of AURKB on mitotic chromosomes and thereby coordinates faithful mitotic progression and completion of cytokinesis. BCR(KLHL12) is involved in ER-Golgi transport by regulating the size of COPII coats, thereby playing a key role in collagen export, which is required for embryonic stem (ES) cells division: BCR(KLHL12) acts by mediating monoubiquitination of SEC31 (SEC31A or SEC31B). BCR(KLHL3) acts as a regulator of ion transport in the distal nephron; by mediating ubiquitination of WNK4. The BCR(KLHL20) E3 ubiquitin ligase complex is involved in interferon response and anterograde Golgi to endosome transport: it mediates both ubiquitination leading to degradation and 'Lys-33'-linked ubiquitination. The BCR(KLHL21) E3 ubiquitin ligase complex regulates localization of the chromosomal passenger complex (CPC) from chromosomes to the spindle midzone in anaphase and mediates the ubiquitination of AURKB. The BCR(KLHL22) ubiquitin ligase complex mediates monoubiquitination of PLK1, leading to PLK1 dissociation from phosphoreceptor proteins and subsequent removal from kinetochores, allowing silencing of the spindle assembly checkpoint (SAC) and chromosome segregation. The BCR(KLHL22) ubiquitin ligase complex is also responsible for the amino acid-stimulated 'Lys-48' polyubiquitination and proteasomal degradation of DEPDC5. Through the degradation of DEPDC5, releases the GATOR1 complex-mediated inhibition of the TORC1 pathway. The BCR(KLHL25) ubiquitin ligase complex is involved in translational homeostasis by mediating ubiquitination and subsequent degradation of hypophosphorylated EIF4EBP1 (4E-BP1). The BCR(KLHL25) ubiquitin ligase complex is also involved in lipid synthesis by mediating ubiquitination and degradation of ACLY. The BCR(KBTBD8) complex acts by mediating monoubiquitination of NOLC1 and TCOF1, leading to remodel the translational program of differentiating cells in favor of neural crest specification. Involved in ubiquitination of cyclin E and of cyclin D1 (in vitro) thus involved in regulation of G1/S transition. Involved in the ubiquitination of KEAP1, ENC1 and KLHL41. In concert with ATF2 and RBX1, promotes degradation of KAT5 thereby attenuating its ability to acetylate and activate ATM. The BCR(KCTD17) E3 ubiquitin ligase complex mediates ubiquitination and degradation of TCHP, a down-regulator of cilium assembly, thereby inducing ciliogenesis. The BCR(KLHL24) E3 ubiquitin ligase complex mediates ubiquitination of KRT14, controls KRT14 levels during keratinocytes differentiation, and is essential for skin integrity. The BCR(KLHL18) E3 ubiquitin ligase complex mediates the ubiquitination of AURKA leading to its activation at the centrosome which is required for initiating mitotic entry. The BCR(KEAP1) E3 ubiquitin ligase complex acts as a key sensor of oxidative and electrophilic stress by mediating ubiquitination and degradation of NFE2L2/NRF2, a transcription factor regulating expression of many cytoprotective genes. As part of the CUL3(KBTBD6/7) E3 ubiquitin ligase complex functions mediates 'Lys-48' ubiquitination and proteasomal degradation of TIAM1. By controlling the ubiquitination of that RAC1 guanine exchange factors (GEF), regulates RAC1 signal transduction and downstream biological processes including the organization of the cytoskeleton, cell migration and cell proliferation. The BCR(KBTBD4) E3 ubiquitin ligase complex targets CoREST corepressor complex components RCOR1, KDM1A/LSD1 and HDAC2 for proteasomal degradation with RCOR1 likely to be the primary target while degradation of KDM1A and HDAC2 is likely due to their association with RCOR1. It also targets RCOR3, MIER2 and MIER3 for proteasomal degradation as well as associated proteins ZNF217 and RREB1 with degradation being dependent on the presence of an ELM2 domain in the target proteins. The BCR(ARMC5) complex mediates premature transcription termination of transcripts that are unfavorably configured for transcriptional elongation by mediating ubiquitination of Pol II subunit POLR2A. Required for 'Lys-63'-linked ubiquitination of large ribosomal subunit protein MRPL12. In Rattus norvegicus (Rat), this protein is Cullin-3 (Cul3).